The following is a 316-amino-acid chain: Beta-galactosidase small subunit (316 aa).

This sequence belongs to the bacterial beta-galactosidase small subunit family. As to quaternary structure, heterodimer of a large (LacL) and a small subunit (LacM).

The enzyme catalyses Hydrolysis of terminal non-reducing beta-D-galactose residues in beta-D-galactosides.. Component of a beta-galactosidase. The polypeptide is Beta-galactosidase small subunit (lacM) (Lactobacillus acidophilus (strain ATCC 700396 / NCK56 / N2 / NCFM)).